The chain runs to 87 residues: uncharacterized protein (87 aa).

It belongs to the SF3B5 family.

This is an uncharacterized protein from Arabidopsis thaliana (Mouse-ear cress).